The primary structure comprises 182 residues: MKEELIRMILEEECIKFGHFILTSGKESSYYIDIKKLITNPKALRLIARLIKEKAEEEGIQFDKVAGPELGAVPIATALALETDRPLLIVRKKKKEHGTGRQIEGEVKEGDRVLLVEDVTTTGGSVLRAAKILKEAGAEITGIFVVVDREEGAKEAIEKEGFKLYPLVLVHELFEAAGVSSE.

5-phospho-alpha-D-ribose 1-diphosphate is bound by residues Arg91, Lys92, Lys95, His97, and 117 to 125; that span reads EDVTTTGGS. Residues Thr121 and Arg149 each contribute to the orotate site.

This sequence belongs to the purine/pyrimidine phosphoribosyltransferase family. PyrE subfamily. Homodimer. The cofactor is Mg(2+).

The enzyme catalyses orotidine 5'-phosphate + diphosphate = orotate + 5-phospho-alpha-D-ribose 1-diphosphate. It functions in the pathway pyrimidine metabolism; UMP biosynthesis via de novo pathway; UMP from orotate: step 1/2. Its function is as follows. Catalyzes the transfer of a ribosyl phosphate group from 5-phosphoribose 1-diphosphate to orotate, leading to the formation of orotidine monophosphate (OMP). In Pyrococcus furiosus (strain ATCC 43587 / DSM 3638 / JCM 8422 / Vc1), this protein is Orotate phosphoribosyltransferase.